The sequence spans 417 residues: MNRTYDIVIAGGGVIGASCAYQLSRRGNLRIAVVDDKRPGNATRASAGGLWAIGESVGLGCGVIFFRMMSSRNRREAQGAAVAVDASTPHILPPAFFDLALQSNALYPELHRELIERHGMDFKFERTGLKYVIQDDEDRQYAEHIVAQIPHLAEQVRWLDREELRRAEPAVSHAAHGALEFLCDHQVSPFRLADAYLEAARQNGVELLPGTNVTGVLRQGRRISGVRTDNAGVLHCRTLINAAGAWAAELSEMATGRRIPVKPVKGQIVLTERMPRLLNGCLTTSDCYMAQKDNGEILIGSTTEDKGFDVSNTFPEIAGLVQGAVRCVPELQQVNLKRTWAGLRPGSPDELPILGPVAEVEGYLNACGHFRTGILTSAITGVLLDRLVHEETLPLDIAPFLAARFQPEPAAVAVAAC.

Positions 1–18 (MNRTYDIVIAGGGVIGAS) are cleaved as a signal peptide. FAD is bound at residue 7–21 (IVIAGGGVIGASCAY). Cys-19 is lipidated: N-palmitoyl cysteine. The S-diacylglycerol cysteine moiety is linked to residue Cys-19. The chain crosses the membrane as a helical span at residues 46–66 (SAGGLWAIGESVGLGCGVIFF).

This sequence belongs to the FAD-dependent glycerol-3-phosphate dehydrogenase family. As to quaternary structure, heterotrimer of HcnA, HcnB and HcnC. Requires FAD as cofactor.

It is found in the cell membrane. The catalysed reaction is glycine + 2 A = hydrogen cyanide + 2 AH2 + CO2. With respect to regulation, oxygen is necessary for cyanogenesis. Activated by succinate, glycine methyl ester, glucose and D,L-methionine in addition to glycine. Phenazine methosulfate, methylene blue, 2,6-dichlorophenolindophenol (DCIP) and ferricyanide can replace oxygen for the reaction. Inhibited by pyrrolnitrin and acriflavine at 1 mM concentration. Functionally, a three-component membrane-bound flavoenzyme that catalyzes the formation of hydrogen cyanide, a secondary metabolite, by transfer of electrons to a cyanide-resistant branch of the aerobic respiratory chain. The chain is Hydrogen cyanide synthase subunit HcnC from Pseudomonas aeruginosa (strain ATCC 15692 / DSM 22644 / CIP 104116 / JCM 14847 / LMG 12228 / 1C / PRS 101 / PAO1).